Reading from the N-terminus, the 561-residue chain is Lysine--tRNA ligase (561 aa).

2 residues coordinate Mg(2+): Glu-409 and Glu-416.

It belongs to the class-II aminoacyl-tRNA synthetase family. In terms of assembly, homodimer. Requires Mg(2+) as cofactor.

The protein localises to the cytoplasm. The catalysed reaction is tRNA(Lys) + L-lysine + ATP = L-lysyl-tRNA(Lys) + AMP + diphosphate. In Trichormus variabilis (strain ATCC 29413 / PCC 7937) (Anabaena variabilis), this protein is Lysine--tRNA ligase.